Here is a 579-residue protein sequence, read N- to C-terminus: V-type ATP synthase alpha chain (579 aa).

An ATP-binding site is contributed by 238–245; it reads GPFGAGKT.

This sequence belongs to the ATPase alpha/beta chains family.

It catalyses the reaction ATP + H2O + 4 H(+)(in) = ADP + phosphate + 5 H(+)(out). In terms of biological role, produces ATP from ADP in the presence of a proton gradient across the membrane. The V-type alpha chain is a catalytic subunit. This is V-type ATP synthase alpha chain from Borrelia hermsii (strain HS1 / DAH).